A 438-amino-acid chain; its full sequence is Tol-Pal system protein TolB (438 aa).

The N-terminal stretch at 1–36 (MTPAFRRADLTGFLRTYGAALILLLAAMLAWQPAQA) is a signal peptide.

This sequence belongs to the TolB family. The Tol-Pal system is composed of five core proteins: the inner membrane proteins TolA, TolQ and TolR, the periplasmic protein TolB and the outer membrane protein Pal. They form a network linking the inner and outer membranes and the peptidoglycan layer.

It localises to the periplasm. In terms of biological role, part of the Tol-Pal system, which plays a role in outer membrane invagination during cell division and is important for maintaining outer membrane integrity. This Bordetella pertussis (strain Tohama I / ATCC BAA-589 / NCTC 13251) protein is Tol-Pal system protein TolB.